The chain runs to 412 residues: Putative competence-damage inducible protein (412 aa).

The protein belongs to the CinA family.

The polypeptide is Putative competence-damage inducible protein (Bacillus cereus (strain B4264)).